Consider the following 390-residue polypeptide: Substance-K receptor (390 aa).

Over 1-32 (MGTRAIVSDANILSGLESNATGVTAFSMPGWQ) the chain is Extracellular. Residue asparagine 19 is glycosylated (N-linked (GlcNAc...) asparagine). The chain crosses the membrane as a helical span at residues 33 to 56 (LALWATAYLALVLVAVTGNATVIW). At 57-69 (IILAHERMRTVTN) the chain is on the cytoplasmic side. A helical membrane pass occupies residues 70–90 (YFIINLALADLCMAAFNATFN). The Extracellular portion of the chain corresponds to 91 to 107 (FIYASHNIWYFGRAFCY). Cysteine 106 and cysteine 181 are disulfide-bonded. A helical membrane pass occupies residues 108–129 (FQNLFPITAMFVSIYSMTAIAA). Topologically, residues 130-149 (DRYMAIVHPFQPRLSAPSTK) are cytoplasmic. Residues 150-170 (AIIAGIWLVALALASPQCFYS) form a helical membrane-spanning segment. The Extracellular portion of the chain corresponds to 171–196 (TITVDEGATKCVVAWPNDNGGKMLLL). The chain crosses the membrane as a helical span at residues 197 to 218 (YHLVVFVLIYFLPLLVMFGAYS). The Cytoplasmic segment spans residues 219 to 251 (VIGLTLWKRAVPRHQAHGANLRHLQAKKKFVKA). The chain crosses the membrane as a helical span at residues 252-272 (MVLVVLTFAICWLPYHLYFIL). Over 273-290 (GTFQEDIYYHKFIQQVYL) the chain is Extracellular. Residues 291-310 (ALFWLAMSSTMYNPIIYCCL) traverse the membrane as a helical segment. Residues 311-390 (NHRFRSGFRL…PAGPICKAQA (80 aa)) are Cytoplasmic-facing. Cysteine 324 carries S-palmitoyl cysteine lipidation. The interval 365–390 (HSEATNGQVGSPQDGEPAGPICKAQA) is disordered. A compositionally biased stretch (polar residues) spans 366–375 (SEATNGQVGS).

Belongs to the G-protein coupled receptor 1 family.

The protein resides in the cell membrane. This is a receptor for the tachykinin neuropeptide substance K (neurokinin A). It is associated with G proteins that activate a phosphatidylinositol-calcium second messenger system. The rank order of affinity of this receptor to tachykinins is: substance K &gt; neuromedin-K &gt; substance P. The polypeptide is Substance-K receptor (Tacr2) (Rattus norvegicus (Rat)).